The primary structure comprises 808 residues: Beta-catenin/armadillo-related protein 1 (808 aa).

The segment at 1 to 85 (MDLDPNLVIN…SSHLSGMSSM (85 aa)) is involved in transcriptional activation. ARM repeat units follow at residues 118-160 (RAIP…NETK), 165-209 (CVIF…RAIS), and 369-408 (SDVPSKMKEELLLKSLLELVNSRNAVIRLYSAQTMSNLVA). An involved in transcriptional activation region spans residues 541–808 (NVQDVIEGVR…DQYPYRQGRF (268 aa)). The tract at residues 702 to 808 (TYEGAGEQWS…DQYPYRQGRF (107 aa)) is disordered. A compositionally biased stretch (polar residues) spans 723-736 (YCNSSGRDSSKTYN). Over residues 737-750 (SPMYHSPPSMYPEY) the composition is skewed to low complexity. Positions 786–798 (NIPSNQGPSSHLS) are enriched in polar residues.

This sequence belongs to the beta-catenin family. In terms of assembly, interacts with apr-1, axl-1, daf-16, lin-23, and pop-1 (via acidic region in N-terminus 1-44). Interacts (via ARM repeats) with pry-1.

Its subcellular location is the cytoplasm. The protein localises to the nucleus. The protein resides in the membrane. It is found in the cell junction. Its function is as follows. Participates in the Wnt signaling pathway which affects cell fate and may regulate the stem cell divisions of seam cells during larval development. Functions as a transcriptional activator but is dependent on the interaction with pop-1. Involved in maintaining lin-39 Hox expression and regulating glr-1 abundance at the synapses. Required for mab-5 expression during Q neuroblast migration and for oxidative stress-induced daf-16 signaling. Has roles in egg laying, vulva precursor cell fate determination, Q neuroblast migration, posterior ectodermal cell P12 specification, movement, body length, male tail development and dauer induction. Functionally redundant to wrm-1 and hmp-2. The chain is Beta-catenin/armadillo-related protein 1 (bar-1) from Caenorhabditis briggsae.